The following is a 305-amino-acid chain: Superoxide dismutase [Fe] 2, chloroplastic (305 aa).

A chloroplast-targeting transit peptide spans 1–46 (MMNVAVTATPSSLLYSPLLLPSQGPNRRMQWKRNGKRRLGTKVAVS). The Fe cation site is built by His77, His129, Asp228, and His232. The disordered stretch occupies residues 270-305 (AVQREQEGTETEDEENPDDEVPEVYLDSDIDVSEVD). Residues 277–305 (GTETEDEENPDDEVPEVYLDSDIDVSEVD) are compositionally biased toward acidic residues.

This sequence belongs to the iron/manganese superoxide dismutase family. As to quaternary structure, heterodimer with FSD3. Interacts with MRL7 and PRDA1. Fe cation serves as cofactor.

Its subcellular location is the plastid. It is found in the chloroplast thylakoid. The catalysed reaction is 2 superoxide + 2 H(+) = H2O2 + O2. With respect to regulation, activated by cpn20/cpn21 (in vitro). In terms of biological role, destroys superoxide anion radicals which are normally produced within the cells and which are toxic to biological systems. Plays important role in chloroplast development, particularly in the maintenance of thylakoids membranes. Seems to act as a heterodimer with FSD3. The protein is Superoxide dismutase [Fe] 2, chloroplastic (FSD2) of Arabidopsis thaliana (Mouse-ear cress).